A 141-amino-acid polypeptide reads, in one-letter code: ATP synthase epsilon chain (141 aa).

Belongs to the ATPase epsilon chain family. In terms of assembly, F-type ATPases have 2 components, CF(1) - the catalytic core - and CF(0) - the membrane proton channel. CF(1) has five subunits: alpha(3), beta(3), gamma(1), delta(1), epsilon(1). CF(0) has three main subunits: a, b and c.

Its subcellular location is the cell inner membrane. Functionally, produces ATP from ADP in the presence of a proton gradient across the membrane. In Burkholderia cenocepacia (strain ATCC BAA-245 / DSM 16553 / LMG 16656 / NCTC 13227 / J2315 / CF5610) (Burkholderia cepacia (strain J2315)), this protein is ATP synthase epsilon chain.